Here is a 251-residue protein sequence, read N- to C-terminus: DNA repair protein RecO (251 aa).

Belongs to the RecO family.

Its function is as follows. Involved in DNA repair and RecF pathway recombination. In Nitratidesulfovibrio vulgaris (strain ATCC 29579 / DSM 644 / CCUG 34227 / NCIMB 8303 / VKM B-1760 / Hildenborough) (Desulfovibrio vulgaris), this protein is DNA repair protein RecO.